The primary structure comprises 175 residues: Epididymal-specific lipocalin-8 (175 aa).

The first 25 residues, 1 to 25 (MPGAAEALPTVTVTLVAGAVPPASG), serve as a signal peptide directing secretion. Residues N66 and N74 are each glycosylated (N-linked (GlcNAc...) asparagine). Residues C79 and C166 are joined by a disulfide bond.

The protein belongs to the calycin superfamily. Lipocalin family.

The protein resides in the secreted. Functionally, may play a role in male fertility. May act as a retinoid carrier protein within the epididymis. This Homo sapiens (Human) protein is Epididymal-specific lipocalin-8 (LCN8).